A 105-amino-acid chain; its full sequence is Death-associated protein 1 homolog (105 aa).

The disordered stretch occupies residues 75–105; it reads AAQVAHQKPVPSAQKLPAGQHLNQHIHQPRK. Over residues 95 to 105 the composition is skewed to polar residues; sequence HLNQHIHQPRK.

Belongs to the DAP-DAPL1 family. In terms of assembly, associates with ribosomes; inhibiting translation. Interacts with eiF5a (eif5a and eif5a2); inhibiting translation.

Functionally, ribosome-binding protein involved in ribosome hibernation, a process during which ribosomes are stabilized in an inactive state and preserved from proteasomal degradation. Acts via its association with eiF5a (eif5a and eif5a2) at the polypeptide exit tunnel of the ribosome, preventing mRNA translation. Involved in ribosome hibernation in the mature egg by preventing mRNA translation, leading to ribosome inactivation. Ribosomes, which are produced in large quantities during oogenesis, are stored and translationally repressed in the egg and early embryo. Compared to dap1b, binds and inactivates ribosomes less efficiently. The protein is Death-associated protein 1 homolog of Danio rerio (Zebrafish).